We begin with the raw amino-acid sequence, 565 residues long: DNA-directed RNA polymerase subunit beta C-terminal section (565 aa).

It belongs to the RNA polymerase beta chain family. In plastids the minimal PEP RNA polymerase catalytic core is composed of four subunits: alpha, beta, beta', and beta''. When a (nuclear-encoded) sigma factor is associated with the core the holoenzyme is formed, which can initiate transcription.

It is found in the plastid. Its subcellular location is the chloroplast. The enzyme catalyses RNA(n) + a ribonucleoside 5'-triphosphate = RNA(n+1) + diphosphate. Functionally, DNA-dependent RNA polymerase catalyzes the transcription of DNA into RNA using the four ribonucleoside triphosphates as substrates. The protein is DNA-directed RNA polymerase subunit beta C-terminal section (rpoB2) of Tetradesmus obliquus (Green alga).